A 411-amino-acid chain; its full sequence is MTKLAYFECPTGIAGDMCLGALLDLGVPLSLLQDYFRRLDIEQEFELQVSAVHRQSQQATYVRVELGAEPGPPGKHQHSHHRHLPEIERLILSAGLPHQAERWSLDIFRNLALAEGKVHGIEPNRVHFHEVGATDAIVDIVGTCLGLHWLGVEEMFCSALPTGGGTVKAAHGKLSVPVPAVLQLWQTRQVPVYDNGIHKELVTPTGAAIATTLAQSFGPPPPLSLHQIGLGAGTLDLSLPNILRIWLGESAASPASGTHPETVTVLETQIDDLNPQAFGYVFDALFQVGALDVFTQAVGMKKSRPGILLTVICRPETVSACETVIFKETSTLGIRRSQQQRTALQREIKTIDTAYGPVQIKLAYHDQQLVNVQPEYEDCAQIAQTHHLSWQQVYQAALLAWYQQSEIIGVK.

The protein belongs to the LarC family.

This is Putative nickel insertion protein from Acaryochloris marina (strain MBIC 11017).